We begin with the raw amino-acid sequence, 210 residues long: Outer-membrane lipoprotein LolB (210 aa).

The first 18 residues, 1 to 18 (MKKFTKILSLSTLLFLAG), serve as a signal peptide directing secretion. A lipid anchor (N-palmitoyl cysteine) is attached at Cys-19. A lipid anchor (S-diacylglycerol cysteine) is attached at Cys-19.

The protein belongs to the LolB family. In terms of assembly, monomer.

It is found in the cell outer membrane. Its function is as follows. Plays a critical role in the incorporation of lipoproteins in the outer membrane after they are released by the LolA protein. In Actinobacillus pleuropneumoniae serotype 5b (strain L20), this protein is Outer-membrane lipoprotein LolB.